The primary structure comprises 444 residues: MSSTSPNLQKAIDLASKAAQEDKAGNYEEALQLYQHAVQYFLHVVKYEAQGDKAKQSIRAQCTEYLDRAEKLKEYLKNKEKKAQKPVKEGQPSPADEKGNDSDGEGESDDPEKKKLQNQLQGAIVIERPNVKWSDVAGLEGAKEALKEAVILPIKFPHLFTGKRTPWRGILLFGPPGTGKSYLAKAVATEANNSTFFSISSSDLVSKWLGESEKLVKNLFQLARENKPSIIFIDEIDSLCGSRSENESEAARRIKTEFLVQMRGVGVDNDGILVLGATNIPWVLDSAIRRRFEKRIYIPLPEPHARAAMFKLHLGTTQNSLTEADFRELGRKTDGYSGADISIIVRDALMQPVRKVQSATHFKKVRGPSRADPNHLVDDLLTPCSPGDPGAIEMTWMDVPGDKLLEPVVSMSDMLRSLSNTKPTVNEHDLLKLKKFTEDFGQEG.

One can recognise an MIT domain in the interval 4–82; sequence TSPNLQKAID…KEYLKNKEKK (79 aa). Residues 19–82 adopt a coiled-coil conformation; it reads AQEDKAGNYE…KEYLKNKEKK (64 aa). The segment covering 78–88 has biased composition (basic and acidic residues); it reads NKEKKAQKPVK. Positions 78–117 are disordered; the sequence is NKEKKAQKPVKEGQPSPADEKGNDSDGEGESDDPEKKKLQ. Residues S93, S102, and S108 each carry the phosphoserine modification. 174 to 181 contributes to the ATP binding site; that stretch reads GPPGTGKS. S410 carries the post-translational modification Phosphoserine.

This sequence belongs to the AAA ATPase family. As to quaternary structure, proposed to be monomeric or homodimeric in nucleotide-free form and to oligomerize upon binding to ATP to form two stacked hexameric or heptameric rings with a central pore through which ESCRT-III substrates are translocated in an ATP-dependent manner. In vitro, associates on the inside of a helical tubular structure formed by a CHMP2A-CHMP3 polymer. Interacts with CHMP1A, CHMP1B, CHMP2A, CHMP4B and CHMP6. Interacts with VPS4A; the interaction suggests a heteromeric assembly with VPS4A. Interacts with VTA1.

It localises to the late endosome membrane. It carries out the reaction ATP + H2O = ADP + phosphate + H(+). Its function is as follows. Involved in late steps of the endosomal multivesicular bodies (MVB) pathway. Recognizes membrane-associated ESCRT-III assemblies and catalyzes their disassembly, possibly in combination with membrane fission. Redistributes the ESCRT-III components to the cytoplasm for further rounds of MVB sorting. MVBs contain intraluminal vesicles (ILVs) that are generated by invagination and scission from the limiting membrane of the endosome and mostly are delivered to lysosomes enabling degradation of membrane proteins, such as stimulated growth factor receptors, lysosomal enzymes and lipids. VPS4A/B are required for the exosomal release of SDCBP, CD63 and syndecan. (Microbial infection) In conjunction with the ESCRT machinery also appears to function in topologically equivalent membrane fission events, such as the terminal stages of cytokinesis and enveloped virus budding (lentiviruses). The polypeptide is Vacuolar protein sorting-associated protein 4B (VPS4B) (Pongo abelii (Sumatran orangutan)).